We begin with the raw amino-acid sequence, 451 residues long: Adenylyltransferase and sulfurtransferase MOCS3 (451 aa).

T60 carries the phosphothreonine modification. ATP-binding positions include G99, D120, 127–131 (SNFHR), K144, and 188–189 (DN). Residues C229 and C232 each coordinate Zn(2+). Residue C246 is the Glycyl thioester intermediate; for adenylyltransferase activity of the active site. Zn(2+) is bound by residues C304 and C307. The 97-residue stretch at 353–449 (QQQPHLLIDV…WTHKVDPSFP (97 aa)) folds into the Rhodanese domain. Residue C408 is the Cysteine persulfide intermediate; for sulfurtransferase activity of the active site.

This sequence in the N-terminal section; belongs to the HesA/MoeB/ThiF family. UBA4 subfamily. The cofactor is Zn(2+).

It localises to the cytoplasm. It is found in the cytosol. It catalyses the reaction [molybdopterin-synthase sulfur-carrier protein]-C-terminal Gly-Gly + ATP + H(+) = [molybdopterin-synthase sulfur-carrier protein]-C-terminal Gly-Gly-AMP + diphosphate. The catalysed reaction is [molybdopterin-synthase sulfur-carrier protein]-C-terminal Gly-Gly-AMP + S-sulfanyl-L-cysteinyl-[cysteine desulfurase] + AH2 = [molybdopterin-synthase sulfur-carrier protein]-C-terminal-Gly-aminoethanethioate + L-cysteinyl-[cysteine desulfurase] + A + AMP + 2 H(+). It functions in the pathway tRNA modification; 5-methoxycarbonylmethyl-2-thiouridine-tRNA biosynthesis. The protein operates within cofactor biosynthesis; molybdopterin biosynthesis. Plays a central role in 2-thiolation of mcm(5)S(2)U at tRNA wobble positions of cytosolic tRNA(Lys), tRNA(Glu) and tRNA(Gln). Also essential during biosynthesis of the molybdenum cofactor. Acts by mediating the C-terminal thiocarboxylation of sulfur carriers URM1 and MOCS2A. Its N-terminus first activates URM1 and MOCS2A as acyl-adenylates (-COAMP), then the persulfide sulfur on the catalytic cysteine is transferred to URM1 and MOCS2A to form thiocarboxylation (-COSH) of their C-terminus. The reaction probably involves hydrogen sulfide that is generated from the persulfide intermediate and that acts as a nucleophile towards URM1 and MOCS2A. Subsequently, a transient disulfide bond is formed. Does not use thiosulfate as sulfur donor; NFS1 probably acting as a sulfur donor for thiocarboxylation reactions. The sequence is that of Adenylyltransferase and sulfurtransferase MOCS3 from Drosophila ananassae (Fruit fly).